The following is a 490-amino-acid chain: Thiamine biosynthesis bifunctional protein ThiED (490 aa).

Residues 1–213 (MASNGHTLRL…PDPALAATEI (213 aa)) are thiamine-phosphate synthase. Residues 50–54 (QYRNK) and asparagine 82 each bind 4-amino-2-methyl-5-(diphosphooxymethyl)pyrimidine. Mg(2+)-binding residues include aspartate 83 and aspartate 102. Serine 121 contributes to the 4-amino-2-methyl-5-(diphosphooxymethyl)pyrimidine binding site. 147-149 (SRS) lines the 2-[(2R,5Z)-2-carboxy-4-methylthiazol-5(2H)-ylidene]ethyl phosphate pocket. Lysine 150 is a binding site for 4-amino-2-methyl-5-(diphosphooxymethyl)pyrimidine. Residues glycine 177 and 197–198 (IS) each bind 2-[(2R,5Z)-2-carboxy-4-methylthiazol-5(2H)-ylidene]ethyl phosphate. The hydroxymethylpyrimidine/phosphomethylpyrimidine kinase stretch occupies residues 229–490 (LTVAGSDSGG…ILAAEDVRDR (262 aa)). Residue glutamine 266 coordinates 4-amino-5-hydroxymethyl-2-methylpyrimidine.

This sequence in the N-terminal section; belongs to the thiamine-phosphate synthase family. The protein in the C-terminal section; belongs to the ThiD family. Mg(2+) is required as a cofactor.

It catalyses the reaction 2-[(2R,5Z)-2-carboxy-4-methylthiazol-5(2H)-ylidene]ethyl phosphate + 4-amino-2-methyl-5-(diphosphooxymethyl)pyrimidine + 2 H(+) = thiamine phosphate + CO2 + diphosphate. The catalysed reaction is 2-(2-carboxy-4-methylthiazol-5-yl)ethyl phosphate + 4-amino-2-methyl-5-(diphosphooxymethyl)pyrimidine + 2 H(+) = thiamine phosphate + CO2 + diphosphate. The enzyme catalyses 4-methyl-5-(2-phosphooxyethyl)-thiazole + 4-amino-2-methyl-5-(diphosphooxymethyl)pyrimidine + H(+) = thiamine phosphate + diphosphate. It carries out the reaction 4-amino-5-hydroxymethyl-2-methylpyrimidine + ATP = 4-amino-2-methyl-5-(phosphooxymethyl)pyrimidine + ADP + H(+). It catalyses the reaction 4-amino-2-methyl-5-(phosphooxymethyl)pyrimidine + ATP = 4-amino-2-methyl-5-(diphosphooxymethyl)pyrimidine + ADP. Its pathway is cofactor biosynthesis; thiamine diphosphate biosynthesis; 4-amino-2-methyl-5-diphosphomethylpyrimidine from 5-amino-1-(5-phospho-D-ribosyl)imidazole: step 3/3. It functions in the pathway cofactor biosynthesis; thiamine diphosphate biosynthesis; thiamine phosphate from 4-amino-2-methyl-5-diphosphomethylpyrimidine and 4-methyl-5-(2-phosphoethyl)-thiazole: step 1/1. Condenses 4-methyl-5-(beta-hydroxyethyl)thiazole monophosphate (THZ-P) and 2-methyl-4-amino-5-hydroxymethyl pyrimidine pyrophosphate (HMP-PP) to form thiamine monophosphate (TMP). Functionally, catalyzes the phosphorylation of hydroxymethylpyrimidine phosphate (HMP-P) to HMP-PP, and of HMP to HMP-P. In Geobacter sulfurreducens (strain ATCC 51573 / DSM 12127 / PCA), this protein is Thiamine biosynthesis bifunctional protein ThiED (thiDE).